The following is a 327-amino-acid chain: Phenylalanine--tRNA ligase alpha subunit (327 aa).

Residue Glu-252 participates in Mg(2+) binding.

The protein belongs to the class-II aminoacyl-tRNA synthetase family. Phe-tRNA synthetase alpha subunit type 1 subfamily. Tetramer of two alpha and two beta subunits. It depends on Mg(2+) as a cofactor.

Its subcellular location is the cytoplasm. The enzyme catalyses tRNA(Phe) + L-phenylalanine + ATP = L-phenylalanyl-tRNA(Phe) + AMP + diphosphate + H(+). This Shewanella baltica (strain OS185) protein is Phenylalanine--tRNA ligase alpha subunit.